A 392-amino-acid polypeptide reads, in one-letter code: Stilbene synthase 2 (392 aa).

Substrate is bound at residue 55–58 (KFNR). Cys164 is an active-site residue. Residues Leu267 and 305 to 307 (GGP) each bind substrate.

The protein belongs to the thiolase-like superfamily. Chalcone/stilbene synthases family. In terms of assembly, homodimer.

It localises to the cytoplasm. The catalysed reaction is 4-coumaroyl-CoA + 3 malonyl-CoA + 3 H(+) = trans-resveratrol + 4 CO2 + 4 CoA. The protein operates within phytoalexin biosynthesis; 3,4',5-trihydroxystilbene biosynthesis; 3,4',5-trihydroxystilbene from trans-4-coumarate: step 2/2. In terms of biological role, mediates resistance to pathogens which are sensitive to stilbenes. The protein is Stilbene synthase 2 of Vitis vinifera (Grape).